We begin with the raw amino-acid sequence, 861 residues long: Isoleucine--tRNA ligase (861 aa).

Residues 57 to 67 (PYANGNIHVGH) carry the 'HIGH' region motif. Glu549 is an L-isoleucyl-5'-AMP binding site. The 'KMSKS' region motif lies at 590–594 (KMSKS). ATP is bound at residue Lys593.

This sequence belongs to the class-I aminoacyl-tRNA synthetase family. IleS type 1 subfamily. As to quaternary structure, monomer.

The protein resides in the cytoplasm. The enzyme catalyses tRNA(Ile) + L-isoleucine + ATP = L-isoleucyl-tRNA(Ile) + AMP + diphosphate. Catalyzes the attachment of isoleucine to tRNA(Ile). As IleRS can inadvertently accommodate and process structurally similar amino acids such as valine, to avoid such errors it has two additional distinct tRNA(Ile)-dependent editing activities. One activity is designated as 'pretransfer' editing and involves the hydrolysis of activated Val-AMP. The other activity is designated 'posttransfer' editing and involves deacylation of mischarged Val-tRNA(Ile). This is Isoleucine--tRNA ligase from Mycoplasma pneumoniae (strain ATCC 29342 / M129 / Subtype 1) (Mycoplasmoides pneumoniae).